The primary structure comprises 609 residues: UvrABC system protein C (609 aa).

The GIY-YIG domain maps to 13–91 (HEPGVYRMYD…IKLYQPRYNV (79 aa)). Positions 201-236 (QQVLDYLIGKMEQASRNLDFEQAARYRDQIQAVRSV) constitute a UVR domain.

It belongs to the UvrC family. As to quaternary structure, interacts with UvrB in an incision complex.

It localises to the cytoplasm. The UvrABC repair system catalyzes the recognition and processing of DNA lesions. UvrC both incises the 5' and 3' sides of the lesion. The N-terminal half is responsible for the 3' incision and the C-terminal half is responsible for the 5' incision. The chain is UvrABC system protein C from Haemophilus influenzae (strain 86-028NP).